A 318-amino-acid chain; its full sequence is D-alanine--D-alanine ligase (318 aa).

The ATP-grasp domain occupies 116–315 (KQVWQSLGLP…FEQLSLAVLA (200 aa)). ATP is bound at residue 146–201 (MSRLGDLVMVKPAQEGSSIGMAKVSNAQQLAAAIQQAFEYDDKVLLEQFIQGSEYT). Mg(2+) is bound by residues aspartate 269, glutamate 282, and asparagine 284.

It belongs to the D-alanine--D-alanine ligase family. The cofactor is Mg(2+). Requires Mn(2+) as cofactor.

The protein localises to the cytoplasm. The enzyme catalyses 2 D-alanine + ATP = D-alanyl-D-alanine + ADP + phosphate + H(+). Its pathway is cell wall biogenesis; peptidoglycan biosynthesis. Functionally, cell wall formation. This is D-alanine--D-alanine ligase from Pseudoalteromonas atlantica (strain T6c / ATCC BAA-1087).